Reading from the N-terminus, the 259-residue chain is Protein IQ-DOMAIN 10 (259 aa).

The tract at residues 18–39 (KNKSNRGNVHSETSNRVKPVES) is disordered. One can recognise an IQ domain in the interval 50-77 (EVAVIRIQKAFRAFKARKRLCSLKSARR). Positions 61–71 (RAFKARKRLCS) are calmodulin-binding. Positions 226–259 (KPSKKPEKSSPNNVITKTSAKPDEVGNSKKPGSG) are disordered.

This sequence belongs to the IQD family. Binds to multiple calmodulin (CaM) in the presence of Ca(2+) and CaM-like proteins.

It is found in the nucleus. The protein localises to the cytoplasm. It localises to the cytoskeleton. In terms of biological role, may be involved in cooperative interactions with calmodulins or calmodulin-like proteins. Recruits calmodulin proteins to microtubules, thus being a potential scaffold in cellular signaling and trafficking. May associate with nucleic acids and regulate gene expression at the transcriptional or post-transcriptional level. This chain is Protein IQ-DOMAIN 10, found in Arabidopsis thaliana (Mouse-ear cress).